A 179-amino-acid chain; its full sequence is Large ribosomal subunit protein uL5 (179 aa).

Belongs to the universal ribosomal protein uL5 family. As to quaternary structure, part of the 50S ribosomal subunit; part of the 5S rRNA/L5/L18/L25 subcomplex. Contacts the 5S rRNA and the P site tRNA. Forms a bridge to the 30S subunit in the 70S ribosome.

This is one of the proteins that bind and probably mediate the attachment of the 5S RNA into the large ribosomal subunit, where it forms part of the central protuberance. In the 70S ribosome it contacts protein S13 of the 30S subunit (bridge B1b), connecting the 2 subunits; this bridge is implicated in subunit movement. Contacts the P site tRNA; the 5S rRNA and some of its associated proteins might help stabilize positioning of ribosome-bound tRNAs. The protein is Large ribosomal subunit protein uL5 of Ruthia magnifica subsp. Calyptogena magnifica.